We begin with the raw amino-acid sequence, 161 residues long: Allophycocyanin subunit alpha-B (161 aa).

Asn71 is subject to N4-methylasparagine. Cys81 serves as a coordination point for (2R,3E)-phycocyanobilin.

Belongs to the phycobiliprotein family. In terms of assembly, heterohexamer of two alpha chains, one alpha-B chain and three beta chains. In terms of processing, contains one covalently linked bilin chromophore.

Its subcellular location is the cellular thylakoid membrane. Functionally, light-harvesting photosynthetic bile pigment-protein from the phycobiliprotein complex. Allophycocyanin has a maximum absorption at approximately 654 nanometers. In Synechocystis sp. (strain ATCC 27184 / PCC 6803 / Kazusa), this protein is Allophycocyanin subunit alpha-B (apcD).